A 465-amino-acid polypeptide reads, in one-letter code: UDP-N-acetylmuramoylalanine--D-glutamate ligase (465 aa).

115–121 (GTDGKTT) contacts ATP.

This sequence belongs to the MurCDEF family.

It is found in the cytoplasm. It carries out the reaction UDP-N-acetyl-alpha-D-muramoyl-L-alanine + D-glutamate + ATP = UDP-N-acetyl-alpha-D-muramoyl-L-alanyl-D-glutamate + ADP + phosphate + H(+). Its pathway is cell wall biogenesis; peptidoglycan biosynthesis. In terms of biological role, cell wall formation. Catalyzes the addition of glutamate to the nucleotide precursor UDP-N-acetylmuramoyl-L-alanine (UMA). This Chlorobaculum tepidum (strain ATCC 49652 / DSM 12025 / NBRC 103806 / TLS) (Chlorobium tepidum) protein is UDP-N-acetylmuramoylalanine--D-glutamate ligase.